The sequence spans 362 residues: uncharacterized protein (362 aa).

Residues 13 to 33 (VLILSVGLNMLFLLLFYSAIF) traverse the membrane as a helical segment. The LysM domain occupies 314–357 (EEYVVQDGDSLWLIAKRFGIPMDKIIQKNGLNHHRLFPGKVLKL).

It belongs to the chlamydial CPn_0593/CT_474/TC_0759 family.

The protein resides in the membrane. This is an uncharacterized protein from Chlamydia pneumoniae (Chlamydophila pneumoniae).